An 873-amino-acid polypeptide reads, in one-letter code: E3 ubiquitin-protein ligase UPL5 (873 aa).

Positions 1 to 19 are enriched in polar residues; that stretch reads MTLSRSSADDSTNNANRSY. 2 disordered regions span residues 1-37 and 70-90; these read MTLSRSSADDSTNNANRSYSAVAGTDNKRKRDEDSSD and RSGENSRSLSSSGECSSSNRP. Positions 95–171 constitute a Ubiquitin-like domain; it reads LQIFVRMMSG…LQLVARMQST (77 aa). Residues 272 to 296 enclose the C-type lectin domain; it reads CLPIVLEFCKLLRKVCPDQKLYVTC. Residues 532–873 form the HECT domain; it reads SPEALHGGLF…DHVSSSFGKW (342 aa). Cys839 (glycyl thioester intermediate) is an active-site residue.

It belongs to the UPL family. As to quaternary structure, interacts with WRKY53.

The protein localises to the cytoplasm. It carries out the reaction S-ubiquitinyl-[E2 ubiquitin-conjugating enzyme]-L-cysteine + [acceptor protein]-L-lysine = [E2 ubiquitin-conjugating enzyme]-L-cysteine + N(6)-ubiquitinyl-[acceptor protein]-L-lysine.. The protein operates within protein modification; protein ubiquitination. In terms of biological role, E3 ubiquitin protein ligase that regulates leaf senescence through ubiquitination and subsequent degradation of WRKY53. This is E3 ubiquitin-protein ligase UPL5 (UPL5) from Arabidopsis thaliana (Mouse-ear cress).